Consider the following 195-residue polypeptide: Imidazoleglycerol-phosphate dehydratase (195 aa).

It belongs to the imidazoleglycerol-phosphate dehydratase family.

The protein resides in the cytoplasm. It carries out the reaction D-erythro-1-(imidazol-4-yl)glycerol 3-phosphate = 3-(imidazol-4-yl)-2-oxopropyl phosphate + H2O. Its pathway is amino-acid biosynthesis; L-histidine biosynthesis; L-histidine from 5-phospho-alpha-D-ribose 1-diphosphate: step 6/9. This is Imidazoleglycerol-phosphate dehydratase from Geobacillus thermodenitrificans (strain NG80-2).